Consider the following 2094-residue polypeptide: MATLFQSFRGSAMPKRLLRYALARLDLLDSDALDLDNLDLAIGRNTVLEFRDVGIKLPKLAKLLGLPPTFTLLKAKVILLRVTIPMDIYSSSLKIEVDRVDVQLKVDSKDDIDGRSRTTIRGPTDVVPNTVDLAQSFLEQQSPKEKEELEAALSAETQDVGGSLVLGEDEDEQDEGSYGTGQALSLPAFLANFLQGIVDRTQIQIRGVTFQLDVSVPLEPNLNAPDVVTVKLALGQIDVEGVTTSLGSDEQDRPKFVHKEGKRLVSLQDITAFLISEANVFSTFERTTSVPPSLSPQSSAASALRSPVSRESTSMPFQEQEVEGRSTQLPSFEDNLGDSEAALNIPYDLSDEDDQEPGNKTAASSMSTPRASILHDHLAHQDESSSFLQGFTPYTAATPGIHLDADQMDEMSPQPAHDLSTHNQISLSNSVLSNSSSGSSGQEPTEDLTESHLYTHEDAESMYMSAFSQHEPTPQSVVPNELYIDPSESSVGVSSPQGTRDEPSSSLGATYGLEDSQASSTIGFQGLKTSPGLDASTISEQSDSSPAPIIPPSSDGNTEAGPESSIQGERHDRKSQSPNECLTPREPTRLAKKVLALDTLSLYLPSSQKSVHVVPLDGQSSPGEPQPLSPSLASSVFPHVPGAFGASTSLPPSPPPISPTSIELDNQEPNDGILEAILSPISIQFDASIGFILAMVVSRLLGAISPSKEEPAQQTAKDNPSATNQATDHQAVKVTLQAVSILFLERLGGVSEAPDSIFGVRTSKFDEDILLQAQLRNVQCLLSSDETVIDAEGFTFGYAGDDNHIISFDRSKEMMASVKDAVPSPGSEVSIKLKKGGPSSKIDIATLPLQICLDLRRLDETFSWFGGLSSFLNMGSSIASINGIGNSQPAKPPARPASRGVKFDTPINPDDRSATSDNKINMRINTVRLDLIGKDCNVILETSAFKLVSRDEGIGIALRKIQVHGPYSNESGPHPPISVTITGSRIEYSMTPKEADLERLLELISPSKLRDTPDDDEIMVDTLLRQRRKGSVLRLKFDNVAADISNIPHLGCLPSLGEDLARLGTVAKYLPEDDRPGLMSLILVRNAHVSVDVGGRFGVISASMAHFDVAHVSVPSLLAVAARSLEVNRNQIEELVGSSLLASHGDEETPVLVIRLIGGTVEPTITVKLRGLNVEYRVPTIIDLLNLGEDATPQDFEAGLAASVAQFGEQAHVAISGTSAITADSRTIGQDRQKLPVVELYFLDCVVGLNPLGMTSKMGIVLSDSCLKVWLEEKGDAKATWHIKQASILLIDDVALLDPEGKQNVKRHVHRPSDPVSAKIWDMDSVLCAQGFVSISQIRAAIIRVKAIQDEDGQRLIDVEVQDNFLVLETCADSTQTLIGLGNALKPPTPPSKENKFKTEIVPIEDMLASISQDAFGKAEGDYNFDDDFGEPEESDWTEDDLDEDLDIMGALGSQDDGQNTRQLLFDATSSSIMSDRTTTQYANDEVIFSGFSENPSHANSPDMSVENAFFASVPASETPQPEWKSAKMREVVPKEATIKKYPLKIKIRDMHLIWNLFDGYDWQRTRETIGKTVEEIQAKAYERRARMDRRMGYHEEDGLEEEAVSDFLFNSIYIGIPSHQDPRELSQNINQELYGINPSDTESVATTAFTTTTSRMGGPSRPKGKRLKLTRSKHHKITFELSGVNAVVRLLEPGSEETQSLIRVHIRDLDVYDHVPTSTWKRFAMYDEDHGPREMGVPMVDLKVRIVRPVLDVTAEEIVMFVNVLPLRLHVDQDALDFITRFFGFKDDTIKTTSSPSDVPFIQRAEIYDIPVKLDFKPKRVDYAGIRSGRTTEFMNFIILDNASMVMRHAIIYGALGFERFGEMLNDVWMPEIKRHQLPGVLAGLAPVRSLVDVGSGFRHLYEIPIREYKRNGRVVRSIGKGAAAFARTTGTELIKLGAKVAIGTQNMLQGAEGLLVETPEHNRYGVAGPSTVQRPGEWEEIDDSEEDIRHQISLYANQPTGVIQGLRHGYRSLSRDISIARQAIIAVPGEVRESSSATGAAKAVLEKAPIFIFRPAIGATKAIGQTLLGATNSLDPQNLRRMDNKYKPDPKS.

Disordered stretches follow at residues 287-336 (TTSV…EDNL), 348-369 (DLSDEDDQEPGNKTAASSMSTP), 429-449 (NSVLSNSSSGSSGQEPTEDLT), 486-511 (PSESSVGVSSPQGTRDEPSSSLGATY), 523-587 (GFQG…PREP), 643-665 (AFGASTSLPPSPPPISPTSIELD), 708-727 (KEEPAQQTAKDNPSATNQAT), 885-917 (GNSQPAKPPARPASRGVKFDTPINPDDRSATSD), and 2075-2094 (SLDPQNLRRMDNKYKPDPKS). A compositionally biased stretch (low complexity) spans 289–307 (SVPPSLSPQSSAASALRSP). Low complexity predominate over residues 429–441 (NSVLSNSSSGSSG). The span at 487 to 508 (SESSVGVSSPQGTRDEPSSSLG) shows a compositional bias: polar residues. Over residues 542-555 (SDSSPAPIIPPSSD) the composition is skewed to low complexity. Polar residues predominate over residues 712–727 (AQQTAKDNPSATNQAT). Residues 2080 to 2094 (NLRRMDNKYKPDPKS) are compositionally biased toward basic and acidic residues.

The protein belongs to the ATG2 family.

The protein localises to the preautophagosomal structure membrane. It localises to the endoplasmic reticulum membrane. It catalyses the reaction a 1,2-diacyl-sn-glycero-3-phosphocholine(in) = a 1,2-diacyl-sn-glycero-3-phosphocholine(out). The enzyme catalyses a 1,2-diacyl-sn-glycero-3-phospho-L-serine(in) = a 1,2-diacyl-sn-glycero-3-phospho-L-serine(out). The catalysed reaction is a 1,2-diacyl-sn-glycero-3-phosphoethanolamine(in) = a 1,2-diacyl-sn-glycero-3-phosphoethanolamine(out). Functionally, lipid transfer protein required for autophagosome completion and peroxisome degradation. Tethers the edge of the isolation membrane (IM) to the endoplasmic reticulum (ER) and mediates direct lipid transfer from ER to IM for IM expansion. ATG2 binds to the ER exit site (ERES), which is the membrane source for autophagosome formation, using basic residues in its N-terminal region (NR) and to the expanding edge of the IM through its C-terminal region. The latter binding is assisted by an ATG18-PtdIns3P interaction. ATG2 then extracts phospholipids from the membrane source using its NR and transfers them to ATG9 to the IM through its predicted beta-sheet-rich structure for membrane expansion. The protein is Autophagy-related protein 2 (ATG2) of Pyricularia oryzae (strain 70-15 / ATCC MYA-4617 / FGSC 8958) (Rice blast fungus).